A 195-amino-acid chain; its full sequence is MKMNFFNSFPQYGVYILGLNLLLCGVSEGFIGFGMDGFEEMFPLLMLGGMNGGQSNYVRPKPIAPTLPPTPPPPMVKPPSITWRWVPNTRYTWPLFNNMQWPQYNPYVLPLANNAMAKTGSAFNTNTISGTKASSGNAMPVLPAPNAQMISSGGPVPPAAGLMNGMGMGLAGSNMAAANQMTWNTQTTSKGSTPM.

Residues 1 to 29 (MKMNFFNSFPQYGVYILGLNLLLCGVSEG) form the signal peptide.

Component of the acid-insoluble organic matrix of calcified layers of the shell (at protein level).

Its subcellular location is the secreted. In Lottia gigantea (Giant owl limpet), this protein is Proline-rich protein 3.